We begin with the raw amino-acid sequence, 464 residues long: Eukaryotic translation initiation factor 5 (464 aa).

At Ser-9 the chain carries Phosphoserine. Residue 28-35 (GKGNGIKT) coordinates GTP. Disordered stretches follow at residues 145-203 (NPPS…ASQT) and 409-464 (EEES…IDDI). The segment covering 174-184 (ADGSMTNNSLA) has biased composition (polar residues). Residues 254–415 (DKTEKERIDI…KNAEEESSES (162 aa)) form the W2 domain. Acidic residues-rich tracts occupy residues 410–427 (EESS…EEDN) and 451–464 (GDED…IDDI). Phosphoserine occurs at positions 412, 413, and 415.

The protein belongs to the eIF-2-beta/eIF-5 family.

Functionally, catalyzes the hydrolysis of GTP bound to the 40S ribosomal initiation complex (40S.mRNA.Met-tRNA[F].eIF-2.GTP) with the subsequent joining of a 60S ribosomal subunit resulting in the release of eIF-2 and the guanine nucleotide. The subsequent joining of a 60S ribosomal subunit results in the formation of a functional 80S initiation complex (80S.mRNA.Met-tRNA[F]). This is Eukaryotic translation initiation factor 5 (eIF5) from Drosophila melanogaster (Fruit fly).